The following is a 260-amino-acid chain: MGRVIRAQRKGAGSVFKSHTHHRKGPARFRTLDFGERNGYLKGVITEVIHDPGRGAPLARVTFRHPFRYKHQKELFVAAEGMYTGQFVYCGKKATLMVGNVLPLRSIPEGAVVCNVEHKVGDRGVFARCSGDYAIVISHNPDNGTTRVKLPSGAKKIVPSGCRAMIGQVAGGGRTEKPMLKAGNAYHKYRVKRNCWPKVRGVAMNPVEHPHGGGNHQHIGHASTVRRDAPPGQKVGLIAARRTGRLRGQARATAAKADKA.

Residues 1–24 form a disordered region; that stretch reads MGRVIRAQRKGAGSVFKSHTHHRK.

It belongs to the universal ribosomal protein uL2 family.

The protein localises to the cytoplasm. This is Large ribosomal subunit protein uL2 (RPL8) from Solanum lycopersicum (Tomato).